The chain runs to 20 residues: Catechol 1,2-dioxygenase (20 aa).

Belongs to the intradiol ring-cleavage dioxygenase family. Homodimer which dissociates into active monomeric subunits at high ionic strengths. Requires Fe(3+) as cofactor.

It catalyses the reaction catechol + O2 = cis,cis-muconate + 2 H(+). It participates in aromatic compound metabolism; beta-ketoadipate pathway; 5-oxo-4,5-dihydro-2-furylacetate from catechol: step 1/3. This Acinetobacter radioresistens protein is Catechol 1,2-dioxygenase.